A 417-amino-acid chain; its full sequence is Glucose-1-phosphate adenylyltransferase (417 aa).

Alpha-D-glucose 1-phosphate is bound by residues Y98, G163, 178–179, and S197; that span reads EK.

Belongs to the bacterial/plant glucose-1-phosphate adenylyltransferase family. As to quaternary structure, homotetramer.

The catalysed reaction is alpha-D-glucose 1-phosphate + ATP + H(+) = ADP-alpha-D-glucose + diphosphate. Its pathway is glycan biosynthesis; glycogen biosynthesis. In terms of biological role, involved in the biosynthesis of ADP-glucose, a building block required for the elongation reactions to produce glycogen. Catalyzes the reaction between ATP and alpha-D-glucose 1-phosphate (G1P) to produce pyrophosphate and ADP-Glc. In Koribacter versatilis (strain Ellin345), this protein is Glucose-1-phosphate adenylyltransferase.